A 665-amino-acid polypeptide reads, in one-letter code: Cyclic nucleotide-gated cation channel subunit A (665 aa).

The Cytoplasmic segment spans residues 1–110; it reads MRHFKVKAMV…DPTLQSHYRW (110 aa). A helical membrane pass occupies residues 111 to 131; sequence LAIVSLAVLYNIIFVVGRAVF. At 132 to 138 the chain is on the extracellular side; that stretch reads WEINKSA. N135 is a glycosylation site (N-linked (GlcNAc...) asparagine). A helical transmembrane segment spans residues 139-159; sequence PAFWYTLDYLCDFIYLLDTLV. The Cytoplasmic segment spans residues 160 to 186; that stretch reads HMHEGFLDQGLLVRDAFRLRRHYFHTK. Residues 187–207 form a helical membrane-spanning segment; that stretch reads GWYLDVLSMLPTDLAYIWWPP. At 208-253 the chain is on the extracellular side; it reads ETCSSLYLPCPVIVRLNRLLRINRLWEWFDRTETATGYPNAFRICK. The helical transmembrane segment at 254–274 threads the bilayer; the sequence is VVLAILVLIHWNACMYFAISY. At 275–325 the chain is on the cytoplasmic side; it reads EIGFSSDSWVYNLNGTRNNTLQRQYIYSFYWSTLTLTTIGETPTPENDVEY. A helical membrane pass occupies residues 326-346; that stretch reads LFVVADFLAGVLIFATIVGNI. The Extracellular portion of the chain corresponds to 347 to 481; sequence GSMISNMNVA…GKLSVVGDDG (135 aa). Residues 437–559, E496, and R511 contribute to the 3',5'-cyclic GMP site; that span reads LLEA…DGLL. The chain crosses the membrane as a helical span at residues 482–502; the sequence is ITVLATLGAGSVFGEVSVLEI. At 503–665 the chain is on the cytoplasmic side; the sequence is AGNRTGNRRT…SSDAAKQNTL (163 aa). The disordered stretch occupies residues 633–665; the sequence is RSGRLYSLQPKRRPRSRPDATAKSSDAAKQNTL. Polar residues predominate over residues 654–665; the sequence is AKSSDAAKQNTL.

Belongs to the cyclic nucleotide-gated cation channel (TC 1.A.1.5) family. Expressed in antennae and the visual system.

The protein resides in the membrane. In terms of biological role, approximately 50-fold more sensitive to cGMP than to cAMP. May be involved in transduction cascades of both invertebrate photoreceptors and olfactory sensillae. The chain is Cyclic nucleotide-gated cation channel subunit A (CngA) from Drosophila melanogaster (Fruit fly).